The primary structure comprises 446 residues: Minor teichoic acid biosynthesis protein GgaA (446 aa).

The protein belongs to the glycosyltransferase 2 family.

It participates in cell wall biogenesis; poly(glucopyranosyl N-acetylgalactosamine 1-phosphate) teichoic acid biosynthesis. Involved in the biosynthesis of galactosamine-containing minor teichoic acid, a non-essential cell wall polymer in B.subtilis 168. The chain is Minor teichoic acid biosynthesis protein GgaA (ggaA) from Bacillus subtilis (strain 168).